The chain runs to 428 residues: Peptidase B (428 aa).

Mn(2+)-binding residues include K195 and D200. K207 is a catalytic residue. Residues D218, D277, and E279 each coordinate Mn(2+). Residue R281 is part of the active site.

The protein belongs to the peptidase M17 family. Homohexamer. Mn(2+) is required as a cofactor.

The protein resides in the cytoplasm. The catalysed reaction is Release of an N-terminal amino acid, Xaa, from a peptide or arylamide. Xaa is preferably Glu or Asp but may be other amino acids, including Leu, Met, His, Cys and Gln.. Probably plays an important role in intracellular peptide degradation. The protein is Peptidase B of Klebsiella pneumoniae subsp. pneumoniae (strain ATCC 700721 / MGH 78578).